Here is a 294-residue protein sequence, read N- to C-terminus: Eukaryotic translation initiation factor 3 subunit F (294 aa).

An MPN domain is found at valine 20 to cysteine 163.

This sequence belongs to the eIF-3 subunit F family. Component of the eukaryotic translation initiation factor 3 (eIF-3) complex.

The protein resides in the cytoplasm. Functionally, component of the eukaryotic translation initiation factor 3 (eIF-3) complex, which is involved in protein synthesis of a specialized repertoire of mRNAs and, together with other initiation factors, stimulates binding of mRNA and methionyl-tRNAi to the 40S ribosome. The eIF-3 complex specifically targets and initiates translation of a subset of mRNAs involved in cell proliferation. This is Eukaryotic translation initiation factor 3 subunit F from Yarrowia lipolytica (strain CLIB 122 / E 150) (Yeast).